Consider the following 345-residue polypeptide: Phosphoribosylformylglycinamidine cyclo-ligase (345 aa).

Belongs to the AIR synthase family.

The protein localises to the cytoplasm. It catalyses the reaction 2-formamido-N(1)-(5-O-phospho-beta-D-ribosyl)acetamidine + ATP = 5-amino-1-(5-phospho-beta-D-ribosyl)imidazole + ADP + phosphate + H(+). It participates in purine metabolism; IMP biosynthesis via de novo pathway; 5-amino-1-(5-phospho-D-ribosyl)imidazole from N(2)-formyl-N(1)-(5-phospho-D-ribosyl)glycinamide: step 2/2. The protein is Phosphoribosylformylglycinamidine cyclo-ligase of Lactobacillus acidophilus (strain ATCC 700396 / NCK56 / N2 / NCFM).